Reading from the N-terminus, the 250-residue chain is Cell division protein ZapD (250 aa).

The protein belongs to the ZapD family. As to quaternary structure, interacts with FtsZ.

It is found in the cytoplasm. Cell division factor that enhances FtsZ-ring assembly. Directly interacts with FtsZ and promotes bundling of FtsZ protofilaments, with a reduction in FtsZ GTPase activity. The polypeptide is Cell division protein ZapD (Yersinia pestis bv. Antiqua (strain Antiqua)).